The sequence spans 602 residues: CDPK-related protein kinase (602 aa).

The segment at 1-59 is disordered; it reads MGICVSKPSPEPDLHNHHTSIPVNDTSLPPQDNSIPPKDIAIPAQDNNKPPGKKSPFLP. Residues 19–34 are compositionally biased toward polar residues; the sequence is TSIPVNDTSLPPQDNS. 3 consecutive repeat copies span residues 20 to 26, 27 to 33, and 34 to 40. Residues 20 to 40 form a 3 X 7 AA tandem repeats of S-[LI]-P-X-X-D-X region; the sequence is SIPVNDTSLPPQDNSIPPKDI. Residues 148–410 enclose the Protein kinase domain; it reads FEVGEEVGRG…AAQALCHSWI (263 aa). ATP-binding positions include 154–162 and Lys180; that span reads VGRGHFGYT. The active-site Proton acceptor is the Asp276. EF-hand domains are found at residues 451–486, 487–527, 528–563, and 564–602; these read VDELFYLKEQFVLLEPTKNGTISLENIKQALMRNST, DAMK…LEAL, DRWEQHARCAYDLFEKDGNRAIMIEELASELGLGPS, and IPVHAVLHDWIRHTDGKLSFLGYVKLLHGVSTRAIAKAQ.

This sequence belongs to the protein kinase superfamily. CAMK Ser/Thr protein kinase family. CaMK subfamily.

It catalyses the reaction L-seryl-[protein] + ATP = O-phospho-L-seryl-[protein] + ADP + H(+). It carries out the reaction L-threonyl-[protein] + ATP = O-phospho-L-threonyl-[protein] + ADP + H(+). The sequence is that of CDPK-related protein kinase (CRK) from Daucus carota (Wild carrot).